The sequence spans 170 residues: MRDVIRGRAWVFGDDIDTDQIIPGRYLTTQDPEELAKHVMEGADPEFPEKVREGDVIVAGKNFGCGSSREHAPIALKAAGIACVVTRSFARIFYRNAINLGLPLVVCPGVDDAFEDGQGIEVNLREGYVRNLDTGEELEAKPLPDFMMRILEAGGLVELIKREGPRAFEG.

It belongs to the LeuD family. LeuD type 2 subfamily. Heterodimer of LeuC and LeuD.

The enzyme catalyses (2R,3S)-3-isopropylmalate = (2S)-2-isopropylmalate. It functions in the pathway amino-acid biosynthesis; L-leucine biosynthesis; L-leucine from 3-methyl-2-oxobutanoate: step 2/4. Catalyzes the isomerization between 2-isopropylmalate and 3-isopropylmalate, via the formation of 2-isopropylmaleate. This Methanopyrus kandleri (strain AV19 / DSM 6324 / JCM 9639 / NBRC 100938) protein is 3-isopropylmalate dehydratase small subunit 1 (leuD1).